The chain runs to 64 residues: Large ribosomal subunit protein bL35 (64 aa).

The protein belongs to the bacterial ribosomal protein bL35 family.

This chain is Large ribosomal subunit protein bL35, found in Vibrio vulnificus (strain CMCP6).